The chain runs to 345 residues: Holliday junction branch migration complex subunit RuvB (345 aa).

The interval Leu-3–Tyr-187 is large ATPase domain (RuvB-L). ATP contacts are provided by residues Leu-26, Arg-27, Gly-68, Lys-71, Thr-72, Thr-73, Glu-134 to Phe-136, Arg-177, Tyr-187, and Arg-224. Thr-72 serves as a coordination point for Mg(2+). A small ATPAse domain (RuvB-S) region spans residues Ser-188 to Glu-259. The interval Ser-262 to Leu-345 is head domain (RuvB-H). Residues Arg-317 and Arg-322 each contribute to the DNA site.

This sequence belongs to the RuvB family. In terms of assembly, homohexamer. Forms an RuvA(8)-RuvB(12)-Holliday junction (HJ) complex. HJ DNA is sandwiched between 2 RuvA tetramers; dsDNA enters through RuvA and exits via RuvB. An RuvB hexamer assembles on each DNA strand where it exits the tetramer. Each RuvB hexamer is contacted by two RuvA subunits (via domain III) on 2 adjacent RuvB subunits; this complex drives branch migration. In the full resolvosome a probable DNA-RuvA(4)-RuvB(12)-RuvC(2) complex forms which resolves the HJ.

Its subcellular location is the cytoplasm. It carries out the reaction ATP + H2O = ADP + phosphate + H(+). Functionally, the RuvA-RuvB-RuvC complex processes Holliday junction (HJ) DNA during genetic recombination and DNA repair, while the RuvA-RuvB complex plays an important role in the rescue of blocked DNA replication forks via replication fork reversal (RFR). RuvA specifically binds to HJ cruciform DNA, conferring on it an open structure. The RuvB hexamer acts as an ATP-dependent pump, pulling dsDNA into and through the RuvAB complex. RuvB forms 2 homohexamers on either side of HJ DNA bound by 1 or 2 RuvA tetramers; 4 subunits per hexamer contact DNA at a time. Coordinated motions by a converter formed by DNA-disengaged RuvB subunits stimulates ATP hydrolysis and nucleotide exchange. Immobilization of the converter enables RuvB to convert the ATP-contained energy into a lever motion, pulling 2 nucleotides of DNA out of the RuvA tetramer per ATP hydrolyzed, thus driving DNA branch migration. The RuvB motors rotate together with the DNA substrate, which together with the progressing nucleotide cycle form the mechanistic basis for DNA recombination by continuous HJ branch migration. Branch migration allows RuvC to scan DNA until it finds its consensus sequence, where it cleaves and resolves cruciform DNA. The sequence is that of Holliday junction branch migration complex subunit RuvB from Tropheryma whipplei (strain TW08/27) (Whipple's bacillus).